The primary structure comprises 91 residues: UPF0512 protein E (91 aa).

Residues 1–25 (MAIFKSISSISNSTSAMGSSNSTSN) show a composition bias toward low complexity. The tract at residues 1–26 (MAIFKSISSISNSTSAMGSSNSTSNR) is disordered.

This sequence belongs to the UPF0512 family.

This is UPF0512 protein E from Dictyostelium discoideum (Social amoeba).